The sequence spans 459 residues: uncharacterized protein (459 aa).

At Lys-285 the chain carries N6-(pyridoxal phosphate)lysine.

The protein belongs to the class-III pyridoxal-phosphate-dependent aminotransferase family.

The protein localises to the cytoplasm. This is an uncharacterized protein from Schizosaccharomyces pombe (strain 972 / ATCC 24843) (Fission yeast).